The chain runs to 427 residues: UPF0597 protein CPR_0790 (427 aa).

It belongs to the UPF0597 family.

The protein is UPF0597 protein CPR_0790 of Clostridium perfringens (strain SM101 / Type A).